The chain runs to 261 residues: Troponin T, slow skeletal muscle (261 aa).

Positions 1–30 are enriched in acidic residues; that stretch reads MSDTEEQEYEEEQAEDEEAVEEEAPEEPEP. Disordered stretches follow at residues 1–61 and 108–152; these read MSDT…ERVD and ERAE…KKKV. Ser2 bears the Phosphoserine; by CK2 mark. A compositionally biased stretch (basic and acidic residues) spans 31–40; it reads VAEREEERPK. A compositionally biased stretch (pro residues) spans 42–54; sequence SRPVVPPLIPPKI. Residues 108-148 show a composition bias toward basic and acidic residues; it reads ERAEQQRFRTEKERERQAKLAEEKMRKEEEEAKKRAEDDAK.

The protein belongs to the troponin T family. Interacts with TPM3. Expressed in soleus muscle. Isoform 4 is predominantly expressed in fast muscles.

Its function is as follows. Troponin T is the tropomyosin-binding subunit of troponin, the thin filament regulatory complex which confers calcium-sensitivity to striated muscle actomyosin ATPase activity. The polypeptide is Troponin T, slow skeletal muscle (Tnnt1) (Rattus norvegicus (Rat)).